Consider the following 63-residue polypeptide: MGLKAKHKENLCSDSERSKRLYVWIALAIVLSDFTSIFSHWIWGLLILYLQTLMDLPTFVMNV.

A helical transmembrane segment spans residues 21 to 43 (LYVWIALAIVLSDFTSIFSHWIW).

It belongs to the Leviviricetes lysis protein family.

The protein localises to the host cell inner membrane. The protein resides in the host cell outer membrane. In terms of biological role, induces the formation of specific membrane adhesion sites between the inner and outer membranes, apparently leading to host cell lysis. Lysis may be performed via activation of host murein hydrolases. In Escherichia coli (Bacteriophage GA), this protein is Lysis protein.